Here is a 121-residue protein sequence, read N- to C-terminus: Large ribosomal subunit protein uL14c (121 aa).

Belongs to the universal ribosomal protein uL14 family. Part of the 50S ribosomal subunit.

The protein resides in the plastid. Its subcellular location is the apicoplast. Its function is as follows. Binds to 23S rRNA. This chain is Large ribosomal subunit protein uL14c (rpl14), found in Toxoplasma gondii.